The sequence spans 190 residues: Transcription factor E (190 aa).

Positions 4 to 87 constitute an HTH TFE/IIEalpha-type domain; it reads KNKALLEIAK…YWHLETKRLP (84 aa). The tract at residues 170-190 is disordered; that stretch reads PSPKKEKKKTRAKAKRKTRKK. Residues 174-190 are compositionally biased toward basic residues; the sequence is KEKKKTRAKAKRKTRKK.

It belongs to the TFE family. As to quaternary structure, monomer. Interaction with RNA polymerase subunits RpoF and RpoE is necessary for Tfe stimulatory transcription activity. Able to interact with Tbp and RNA polymerase in the absence of DNA promoter. Interacts both with the preinitiation and elongation complexes.

Functionally, transcription factor that plays a role in the activation of archaeal genes transcribed by RNA polymerase. Facilitates transcription initiation by enhancing TATA-box recognition by TATA-box-binding protein (Tbp), and transcription factor B (Tfb) and RNA polymerase recruitment. Not absolutely required for transcription in vitro, but particularly important in cases where Tbp or Tfb function is not optimal. It dynamically alters the nucleic acid-binding properties of RNA polymerases by stabilizing the initiation complex and destabilizing elongation complexes. Seems to translocate with the RNA polymerase following initiation and acts by binding to the non template strand of the transcription bubble in elongation complexes. This chain is Transcription factor E, found in Pyrococcus abyssi (strain GE5 / Orsay).